The following is a 257-amino-acid chain: Triosephosphate isomerase (257 aa).

Substrate-binding residues include N11 and K13. The active-site Electrophile is H96. The active-site Proton acceptor is E170.

The protein belongs to the triosephosphate isomerase family. In terms of assembly, homodimer.

Its subcellular location is the cytoplasm. It carries out the reaction D-glyceraldehyde 3-phosphate = dihydroxyacetone phosphate. It catalyses the reaction dihydroxyacetone phosphate = methylglyoxal + phosphate. It functions in the pathway carbohydrate biosynthesis; gluconeogenesis. The protein operates within carbohydrate degradation; glycolysis; D-glyceraldehyde 3-phosphate from glycerone phosphate: step 1/1. In terms of biological role, triosephosphate isomerase is an extremely efficient metabolic enzyme that catalyzes the interconversion between dihydroxyacetone phosphate (DHAP) and D-glyceraldehyde-3-phosphate (G3P) in glycolysis and gluconeogenesis. Functionally, it is also responsible for the non-negligible production of methylglyoxal a reactive cytotoxic side-product that modifies and can alter proteins, DNA and lipids. The chain is Triosephosphate isomerase from Giardia intestinalis (Giardia lamblia).